The following is a 494-amino-acid chain: Aspartyl/glutamyl-tRNA(Asn/Gln) amidotransferase subunit B (494 aa).

The protein belongs to the GatB/GatE family. GatB subfamily. Heterotrimer of A, B and C subunits.

The enzyme catalyses L-glutamyl-tRNA(Gln) + L-glutamine + ATP + H2O = L-glutaminyl-tRNA(Gln) + L-glutamate + ADP + phosphate + H(+). It catalyses the reaction L-aspartyl-tRNA(Asn) + L-glutamine + ATP + H2O = L-asparaginyl-tRNA(Asn) + L-glutamate + ADP + phosphate + 2 H(+). Allows the formation of correctly charged Asn-tRNA(Asn) or Gln-tRNA(Gln) through the transamidation of misacylated Asp-tRNA(Asn) or Glu-tRNA(Gln) in organisms which lack either or both of asparaginyl-tRNA or glutaminyl-tRNA synthetases. The reaction takes place in the presence of glutamine and ATP through an activated phospho-Asp-tRNA(Asn) or phospho-Glu-tRNA(Gln). This is Aspartyl/glutamyl-tRNA(Asn/Gln) amidotransferase subunit B from Nitrobacter winogradskyi (strain ATCC 25391 / DSM 10237 / CIP 104748 / NCIMB 11846 / Nb-255).